Consider the following 100-residue polypeptide: Aspartyl/glutamyl-tRNA(Asn/Gln) amidotransferase subunit C (100 aa).

This sequence belongs to the GatC family. As to quaternary structure, heterotrimer of A, B and C subunits.

It catalyses the reaction L-glutamyl-tRNA(Gln) + L-glutamine + ATP + H2O = L-glutaminyl-tRNA(Gln) + L-glutamate + ADP + phosphate + H(+). The catalysed reaction is L-aspartyl-tRNA(Asn) + L-glutamine + ATP + H2O = L-asparaginyl-tRNA(Asn) + L-glutamate + ADP + phosphate + 2 H(+). Its function is as follows. Allows the formation of correctly charged Asn-tRNA(Asn) or Gln-tRNA(Gln) through the transamidation of misacylated Asp-tRNA(Asn) or Glu-tRNA(Gln) in organisms which lack either or both of asparaginyl-tRNA or glutaminyl-tRNA synthetases. The reaction takes place in the presence of glutamine and ATP through an activated phospho-Asp-tRNA(Asn) or phospho-Glu-tRNA(Gln). The chain is Aspartyl/glutamyl-tRNA(Asn/Gln) amidotransferase subunit C from Streptococcus pneumoniae (strain P1031).